A 97-amino-acid chain; its full sequence is Large ribosomal subunit protein uL23 (97 aa).

It belongs to the universal ribosomal protein uL23 family. Part of the 50S ribosomal subunit. Contacts protein L29, and trigger factor when it is bound to the ribosome.

In terms of biological role, one of the early assembly proteins it binds 23S rRNA. One of the proteins that surrounds the polypeptide exit tunnel on the outside of the ribosome. Forms the main docking site for trigger factor binding to the ribosome. This is Large ribosomal subunit protein uL23 from Brucella abortus (strain S19).